We begin with the raw amino-acid sequence, 232 residues long: Nuclear transcription factor Y subunit nfyc-1 (232 aa).

A disordered region spans residues 191–232; the sequence is TVPTTSTNGPGHMSEDSFQDPNMHSDFHQRTSNSSVNRSHHN. A compositionally biased stretch (polar residues) spans 220 to 232; sequence RTSNSSVNRSHHN.

The protein belongs to the NFYC/HAP5 subunit family. As to quaternary structure, forms two NF-Y heterotrimeric transcription factor complexes: the nfya-1-NF-Y complex is composed of nfya-1, nfyb-1 and nfyc-1, and the nfya-2-NF-Y complex is composed of nfya-2, nfyb-1 and nfyc-1. Interacts with nfyb-1; the interaction is direct and is required for the interaction with either nfya-1 or nfya-2, and subsequent binding of the complex to the 5'-CCAAT-3' box motif in DNA. In terms of tissue distribution, expressed in certain parts of the gonads with high expression in fertilized oocytes in the uterus and mature oocytes from the distal to the proximal arm of the gonad, but weak expression in the syncytial ovaries and immature oocytes at the beginning of the proximal arm of the gonad. Expressed in the excretory cell, secretory cells in the pharyngeal terminal bulb wall, in the small ganglia surrounding the pharynx and in the neurons running anteriorly to the sensory organs in the head. Not expressed in the intestine, the hypodermis or body wall muscle surrounding the pseudocoelomic space.

The protein localises to the nucleus. It localises to the cytoplasm. Its subcellular location is the perikaryon. Component of sequence-specific heterotrimeric transcription factor (nfya-1-NF-Y and nfya-2-NF-Y) complexes which specifically recognize a 5'-CCAAT-3' box motif found in the promoters of its target genes to regulate their expression and control cellular identity in particular tissue types. In association with the components in the NF-Y complexes, represses the expression of the T-box transcription factor tbx-2 throughout larval development, which most likely restricts its expression to certain tissues. May act to repress txb-2 expression in conjunction with tbx-2 itself, which has an autoregulatory role. In association with the components in the nfya-1-NF-Y complex, negatively regulates the expression of the homeobox protein egl-5 to spatially restrict its expression in tissues such as the head. May regulate egl-5 expression in association with the mes-2-mes-3-mes-6 complex. This Caenorhabditis elegans protein is Nuclear transcription factor Y subunit nfyc-1.